Consider the following 216-residue polypeptide: Cytidylate kinase (216 aa).

Residue 7 to 15 (GPAGTGKST) coordinates ATP.

This sequence belongs to the cytidylate kinase family. Type 1 subfamily.

The protein localises to the cytoplasm. It carries out the reaction CMP + ATP = CDP + ADP. It catalyses the reaction dCMP + ATP = dCDP + ADP. This chain is Cytidylate kinase, found in Chlamydia muridarum (strain MoPn / Nigg).